The primary structure comprises 270 residues: Putative pyruvate, phosphate dikinase regulatory protein (270 aa).

An ADP-binding site is contributed by 148 to 155 (GISRTSKT).

Belongs to the pyruvate, phosphate/water dikinase regulatory protein family. PDRP subfamily.

The enzyme catalyses N(tele)-phospho-L-histidyl/L-threonyl-[pyruvate, phosphate dikinase] + ADP = N(tele)-phospho-L-histidyl/O-phospho-L-threonyl-[pyruvate, phosphate dikinase] + AMP + H(+). It carries out the reaction N(tele)-phospho-L-histidyl/O-phospho-L-threonyl-[pyruvate, phosphate dikinase] + phosphate + H(+) = N(tele)-phospho-L-histidyl/L-threonyl-[pyruvate, phosphate dikinase] + diphosphate. Its function is as follows. Bifunctional serine/threonine kinase and phosphorylase involved in the regulation of the pyruvate, phosphate dikinase (PPDK) by catalyzing its phosphorylation/dephosphorylation. The protein is Putative pyruvate, phosphate dikinase regulatory protein of Bacillus cereus (strain AH187).